A 447-amino-acid polypeptide reads, in one-letter code: Cellulosome-anchoring protein (447 aa).

Residues 1–29 (MKRIKRILAVLTIFALLATINAFTFVSLA) form the signal peptide. Residues 30-180 (QTNTIEIIIG…EIIEASAPEA (151 aa)) form the Cohesin domain. The interval 30–180 (QTNTIEIIIG…EIIEASAPEA (151 aa)) is receptor binding site for duplicated segment of CipA. The disordered stretch occupies residues 177-247 (APEATPTPGS…EHAPFLKGYP (71 aa)). Over residues 188-200 (AGSGAGGGTGSSG) the composition is skewed to gly residues. A compositionally biased stretch (low complexity) spans 201-223 (SGQPSATPTPTATEKPSTTPKTT). 3 consecutive SLH domains span residues 216 to 280 (PSTT…AGKN), 281 to 344 (SSIT…EQGT), and 345 to 408 (DVKT…GAVL). Residues 409-429 (EFTDVPVNYWAYKDIAEGVIY) enclose the SLH 4; truncated domain.

It is found in the secreted. Its subcellular location is the cell wall. The protein localises to the S-layer. Anchors the cellulosome to the cell surface by binding the duplicated segment that is present at the C-terminal end of CipA. This chain is Cellulosome-anchoring protein (ancA), found in Acetivibrio thermocellus (strain ATCC 27405 / DSM 1237 / JCM 9322 / NBRC 103400 / NCIMB 10682 / NRRL B-4536 / VPI 7372) (Clostridium thermocellum).